A 252-amino-acid chain; its full sequence is MKIVISPAKSLDFEKTLPNNQFTKPAYLKQSKEIVSVLNKLNPKELSELMHISDNLAQLNWQRNKNFTTPFTTQNARPAIYTFNGEVYNGLDSYSIAEEKLAVLQNKLRILSGQYGILKPLDLMQAYRLEMGTHLPINEHKNLYSFWKEIVTNDLNKELKNNELFVNLASNEYFSVIDTKKLKVPIITPEFKDYKDEKLKIISFFAKKARGLMVRYIIDNDIETLDGLKGFNYEGYSFDANLSKGNTLVFTR.

This sequence belongs to the UPF0246 family.

The protein is UPF0246 protein FP0718 of Flavobacterium psychrophilum (strain ATCC 49511 / DSM 21280 / CIP 103535 / JIP02/86).